Consider the following 1150-residue polypeptide: ATP-dependent DNA helicase Q-like 4B (1150 aa).

2 disordered regions span residues 124 to 143 and 154 to 179; these read TPAIDNDSTSRTSSTKGSTF and CAHNHPEHSQRSVRGTAKSIDSFSSS. Over residues 132–142 the composition is skewed to low complexity; that stretch reads TSRTSSTKGST. A coiled-coil region spans residues 327–361; sequence DHVEQLHQKRLLLKKQIQQLEILIHNKERKKSQCL. Over residues 416-428 the composition is skewed to basic and acidic residues; the sequence is YDISSGSEEREQS. Positions 416–446 are disordered; the sequence is YDISSGSEEREQSVSEVIDVTDTESSNDKKW. The 176-residue stretch at 478–653 folds into the Helicase ATP-binding domain; sequence INATMSGCDV…VQALGLVNCV (176 aa). An ATP-binding site is contributed by 491–498; sequence MPTGGGKS. The DEAH box signature appears at 597–600; that stretch reads DEAH. The Helicase C-terminal domain occupies 678–823; that stretch reads DIDKFIRENH…QMKMGYNCKA (146 aa). Residues 1029-1111 enclose the HRDC domain; it reads SNLSGILLTA…DSTINDHYKT (83 aa). The interval 1106-1150 is disordered; it reads NDHYKTRPGSGKRRRDENVNPNVAEDDDPDWSASQSHKKVVKNKK. The span at 1141-1150 shows a compositional bias: basic residues; it reads SHKKVVKNKK.

It belongs to the helicase family. RecQ subfamily. Requires Mg(2+) as cofactor. It depends on Mn(2+) as a cofactor. Mostly expressed in roots, seedlings, shoots, shoot apical mersitem, flowers, and siliques.

The protein resides in the nucleus. The enzyme catalyses Couples ATP hydrolysis with the unwinding of duplex DNA by translocating in the 3'-5' direction.. It carries out the reaction ATP + H2O = ADP + phosphate + H(+). Its function is as follows. 3'-5' DNA helicase that may play a role in the repair of DNA. Required to promote but not to suppress crossovers. The polypeptide is ATP-dependent DNA helicase Q-like 4B (RECQL4B) (Arabidopsis thaliana (Mouse-ear cress)).